A 221-amino-acid polypeptide reads, in one-letter code: Phosphoribosylformylglycinamidine synthase subunit PurQ (221 aa).

Positions Thr-5–Gln-221 constitute a Glutamine amidotransferase type-1 domain. The active-site Nucleophile is Cys-89. Catalysis depends on residues His-197 and Glu-199.

As to quaternary structure, part of the FGAM synthase complex composed of 1 PurL, 1 PurQ and 2 PurS subunits.

The protein localises to the cytoplasm. The catalysed reaction is N(2)-formyl-N(1)-(5-phospho-beta-D-ribosyl)glycinamide + L-glutamine + ATP + H2O = 2-formamido-N(1)-(5-O-phospho-beta-D-ribosyl)acetamidine + L-glutamate + ADP + phosphate + H(+). It catalyses the reaction L-glutamine + H2O = L-glutamate + NH4(+). Its pathway is purine metabolism; IMP biosynthesis via de novo pathway; 5-amino-1-(5-phospho-D-ribosyl)imidazole from N(2)-formyl-N(1)-(5-phospho-D-ribosyl)glycinamide: step 1/2. Part of the phosphoribosylformylglycinamidine synthase complex involved in the purines biosynthetic pathway. Catalyzes the ATP-dependent conversion of formylglycinamide ribonucleotide (FGAR) and glutamine to yield formylglycinamidine ribonucleotide (FGAM) and glutamate. The FGAM synthase complex is composed of three subunits. PurQ produces an ammonia molecule by converting glutamine to glutamate. PurL transfers the ammonia molecule to FGAR to form FGAM in an ATP-dependent manner. PurS interacts with PurQ and PurL and is thought to assist in the transfer of the ammonia molecule from PurQ to PurL. The sequence is that of Phosphoribosylformylglycinamidine synthase subunit PurQ from Prochlorococcus marinus subsp. pastoris (strain CCMP1986 / NIES-2087 / MED4).